We begin with the raw amino-acid sequence, 94 residues long: Protein translocase subunit SecE (94 aa).

A disordered region spans residues 1–32 (MTDAVGSIDTPDAQDEVPESKKTRKGGKRAKK). Positions 22 to 32 (KTRKGGKRAKK) are enriched in basic residues. Residues 59–81 (QLTSYTTVVIFFVAIMIRLVTVI) traverse the membrane as a helical segment.

Belongs to the SecE/SEC61-gamma family. Component of the Sec protein translocase complex. Heterotrimer consisting of SecY, SecE and SecG subunits. The heterotrimers can form oligomers, although 1 heterotrimer is thought to be able to translocate proteins. Interacts with the ribosome. Interacts with SecDF, and other proteins may be involved. Interacts with SecA.

Its subcellular location is the cell membrane. Essential subunit of the Sec protein translocation channel SecYEG. Clamps together the 2 halves of SecY. May contact the channel plug during translocation. This chain is Protein translocase subunit SecE, found in Streptomyces galbus.